Consider the following 149-residue polypeptide: Large ribosomal subunit protein bL9 (149 aa).

The protein belongs to the bacterial ribosomal protein bL9 family.

In terms of biological role, binds to the 23S rRNA. In Teredinibacter turnerae (strain ATCC 39867 / T7901), this protein is Large ribosomal subunit protein bL9.